The sequence spans 644 residues: Macrolide export ATP-binding/permease protein MacB (644 aa).

Residues 1–268 (MNIIEIKQLN…SAIVAHKMRS (268 aa)) are Cytoplasmic-facing. The ABC transporter domain occupies 4-242 (IEIKQLNRYF…VKNPSVFKGR (239 aa)). 40–47 (GQSGSGKS) contacts ATP. The chain crosses the membrane as a helical span at residues 269–289 (LLTMLGIIIGITSVVSVVALG). The Periplasmic portion of the chain corresponds to 290–523 (NGSQQKILEN…TGTMKLLISS (234 aa)). Residues 524-544 (IAFISLIVGGIGVMNIMLVSV) form a helical membrane-spanning segment. Over 545–573 (TERTKEIGVRMAIGARQINILQQFLIEAV) the chain is Cytoplasmic. The helical transmembrane segment at 574-594 (LICLIGGVAGILLSVLIGVLF) threads the bilayer. At 595-607 (NSFITDFSMDFST) the chain is on the periplasmic side. A helical transmembrane segment spans residues 608 to 628 (ASIVTAVLFSTLIGVLFGYMP). At 629-644 (AKKAAELNPITALAQE) the chain is on the cytoplasmic side.

This sequence belongs to the ABC transporter superfamily. Macrolide exporter (TC 3.A.1.122) family. Homodimer. Part of the tripartite efflux system MacAB-TdeA, which is composed of an inner membrane transporter, MacB, a periplasmic membrane fusion protein, MacA, and an outer membrane component, TdeA. The complex forms a large protein conduit and can translocate molecules across both the inner and outer membranes. Interacts with MacA.

Its subcellular location is the cell inner membrane. Functionally, part of the tripartite efflux system MacAB-TdeA. MacB is a non-canonical ABC transporter that contains transmembrane domains (TMD), which form a pore in the inner membrane, and an ATP-binding domain (NBD), which is responsible for energy generation. Confers resistance against macrolides. The polypeptide is Macrolide export ATP-binding/permease protein MacB (Aggregatibacter actinomycetemcomitans (Actinobacillus actinomycetemcomitans)).